Here is a 455-residue protein sequence, read N- to C-terminus: Gamma-aminobutyric acid receptor subunit alpha-1 (455 aa).

Positions 1-27 are cleaved as a signal peptide; the sequence is MKRLLVLCDCLWAWSLLLNALTERSYG. Residues 28–253 lie on the Extracellular side of the membrane; that stretch reads QTSSQDELKD…FHLKRKIGYF (226 aa). Asn-38 is a glycosylation site (N-linked (GlcNAc...) asparagine). Arg-94 is a binding site for 4-aminobutanoate. A glycan (N-linked (GlcNAc...) asparagine) is linked at Asn-138. Thr-157 is a binding site for 4-aminobutanoate. A disulfide bridge links Cys-166 with Cys-180. The helical transmembrane segment at 254-274 threads the bilayer; sequence VIQTYLPCIMTVILSQVSFWL. Over 275-279 the chain is Cytoplasmic; the sequence is NRESV. A helical membrane pass occupies residues 280 to 301; that stretch reads PARTVFGVTTVLTMTTLSISAR. The Extracellular segment spans residues 302–311; sequence NSLPKVAYAT. Residues 312–333 traverse the membrane as a helical segment; sequence AMDWFIAVCYAFVFSALIEFAT. Over 334-420 the chain is Cytoplasmic; the sequence is VNYFTKRGYA…TFNSVSKIDR (87 aa). The helical transmembrane segment at 421-440 threads the bilayer; sequence LSRIAFPLLFGIFNLVYWAT. At 441-455 the chain is on the extracellular side; the sequence is YLNREPQLKAPTPHQ.

This sequence belongs to the ligand-gated ion channel (TC 1.A.9) family. Gamma-aminobutyric acid receptor (TC 1.A.9.5) subfamily. GABRA1 sub-subfamily. Heteropentamer, formed by a combination of alpha (GABRA1-6), beta (GABRB1-3), gamma (GABRG1-3), delta (GABRD), epsilon (GABRE), rho (GABRR1-3), pi (GABRP) and theta (GABRQ) subunits, each subunit exhibiting distinct physiological and pharmacological properties. In terms of tissue distribution, brain.

Its subcellular location is the postsynaptic cell membrane. The protein localises to the cell membrane. The catalysed reaction is chloride(in) = chloride(out). With respect to regulation, allosterically activated by benzodiazepines, the neuroanesthetic alphaxalone and pentobarbital. Inhibited by the antagonist bicuculline. Potentiated by histamine. In terms of biological role, alpha subunit of the heteropentameric ligand-gated chloride channel gated by gamma-aminobutyric acid (GABA), a major inhibitory neurotransmitter in the brain. GABA-gated chloride channels, also named GABA(A) receptors (GABAAR), consist of five subunits arranged around a central pore and contain GABA active binding site(s) located at the alpha and beta subunit interface(s). When activated by GABA, GABAARs selectively allow the flow of chloride anions across the cell membrane down their electrochemical gradient. Chloride influx into the postsynaptic neuron following GABAAR opening decreases the neuron ability to generate a new action potential, thereby reducing nerve transmission. The GABAARs can also initiate the formation of functional inhibitory GABAergic synapses. GABAARs function also as histamine receptor where histamine binds at the interface of two neighboring beta subunits and potentiates GABA response. The protein is Gamma-aminobutyric acid receptor subunit alpha-1 (GABRA1) of Gallus gallus (Chicken).